Reading from the N-terminus, the 318-residue chain is CRISPR-associated protein Cas7/Csa2 1 (318 aa).

Belongs to the CRISPR-associated protein Cas7/Cst2/DevR family. Subtype I-a/Apern subfamily. As to quaternary structure, part of the aCascade ribonucleoprotein complex, minimally composed of Csa2 and Cas5a, which binds crRNA. Other possible components of aCascade in strain P1 are Cas6b (SSO1437) and Csa5 (SSO1443), while SSO1399, Cas5b (SSO1400) and SSO1401 have sometimes been seen weakly associated. Csa2 is probably the major RNA-binding subunit. The Csa2-Cas5a-crRNA complex also binds target DNA homologous to crRNA, probably forming an R-loop. Purified aCascade forms a filament about 6 nm in width.

Its function is as follows. CRISPR (clustered regularly interspaced short palindromic repeat) is an adaptive immune system that provides protection against mobile genetic elements (viruses, transposable elements and conjugative plasmids). CRISPR clusters contain spacers, sequences complementary to antecedent mobile elements, and target invading nucleic acids. CRISPR clusters are transcribed and processed into CRISPR RNA (crRNA). The protein is CRISPR-associated protein Cas7/Csa2 1 (cas7a) of Saccharolobus solfataricus (strain ATCC 35092 / DSM 1617 / JCM 11322 / P2) (Sulfolobus solfataricus).